We begin with the raw amino-acid sequence, 441 residues long: Methylenetetrahydrofolate--tRNA-(uracil-5-)-methyltransferase TrmFO (441 aa).

10–15 serves as a coordination point for FAD; the sequence is GAGLAG.

The protein belongs to the MnmG family. TrmFO subfamily. Requires FAD as cofactor.

The protein resides in the cytoplasm. The enzyme catalyses uridine(54) in tRNA + (6R)-5,10-methylene-5,6,7,8-tetrahydrofolate + NADH + H(+) = 5-methyluridine(54) in tRNA + (6S)-5,6,7,8-tetrahydrofolate + NAD(+). It catalyses the reaction uridine(54) in tRNA + (6R)-5,10-methylene-5,6,7,8-tetrahydrofolate + NADPH + H(+) = 5-methyluridine(54) in tRNA + (6S)-5,6,7,8-tetrahydrofolate + NADP(+). Functionally, catalyzes the folate-dependent formation of 5-methyl-uridine at position 54 (M-5-U54) in all tRNAs. This is Methylenetetrahydrofolate--tRNA-(uracil-5-)-methyltransferase TrmFO from Desulforamulus reducens (strain ATCC BAA-1160 / DSM 100696 / MI-1) (Desulfotomaculum reducens).